The primary structure comprises 132 residues: MKAIGSKPVRALPVGARCICADNTGAKEVEIIAVRNYKGVARRLPTARVGDMVIVTVKKGTPEMRKQVLPAVVIRQRKEIRRPDGTRVKFADNAVVIVTPDGNPKGSDIKGPVAKEAAERWPGIARIAKIII.

It belongs to the universal ribosomal protein uL14 family. As to quaternary structure, part of the 50S ribosomal subunit. Forms a cluster with proteins L3 and L24e, part of which may contact the 16S rRNA in 2 intersubunit bridges.

In terms of biological role, binds to 23S rRNA. Forms part of two intersubunit bridges in the 70S ribosome. The chain is Large ribosomal subunit protein uL14 from Methanocaldococcus jannaschii (strain ATCC 43067 / DSM 2661 / JAL-1 / JCM 10045 / NBRC 100440) (Methanococcus jannaschii).